Consider the following 1357-residue polypeptide: MNVYDDVLDATVVSHSLATHFTTSDYEELLVVRTNILSVYRPTRDGKLYLTDEFKFHGLITDIGLIPQKDSPLSCLLLCTGVAKISILKFNTLTNSIDTLSLHYYEGKFKGKSLVELAKISTLRMDPGSSCALLFNNDIIAFLPFHVNKNDDDEEEEDEDENIDDSELIHSMNQKSQGTNTFNKRKRTKLGDKFTAPSVVLVASELYEGAKNIIDIQFLKNFTKPTIALLYQPKLVWAGNTTISKLPTQYVILTLNIQPAESATKIESTTIAFVKELPWDLHTIVPVSNGAIIVGTNELAFLDNTGVLQSTVLLNSFADKELQKTKIINNSSLEIMFREKNTTSIWIPSSKSKNGGSNNDETLLLMDLKSNIYYIQMEAEGRLLIKFDIFKLPIVNDLLKENSNPKCITRLNATNSNKNMDLFIGFGSGNALVLRLNNLKSTIETREAHNPSSGTNSLMDINDDDDEEMDDLYADEAPENGLTTNDSKGTVETVQPFDIELLSSLRNVGPITSLTVGKVSSIDDVVKGLPNPNKNEYSLVATSGNGSGSHLTVIQTSVQPEIELALKFISITQIWNLKIKGRDRYLITTDSTKSRSDIYESDNNFKLHKGGRLRRDATTVYISMFGEEKRIIQVTTNHLYLYDTHFRRLTTIKFDYEVIHVSVMDPYILVTVSRGDIKIFELEEKNKRKLLKVDLPEILNEMVITSGLILKSNMCNEFLIGLSKSQEEQLLFTFVTADNQIIFFTKDHNDRIFQLNGVDQLNESLYISTYQLGDEIVPDPSIKQVMINKLGHDNKEEYLTILTFGGEIYQYRKLPQRRSRFYRNVTRNDLAITGAPDNAYAKGVSSIERIMHYFPDYNGYSVIFVTGSVPYILIKEDDSTPKIFKFGNIPLVSVTPWSERSVMCVDDIKNARVYTLTTDNMYYGNKLPLKQIKISNVLDDYKTLQKLVYHERAQLFLVSYCKRVPYEALGEDGEKVIGYDENVPHAEGFQSGILLINPKSWKVIDKIDFPKNSVVNEMRSSMIQINSKTKRKREYIIAGVANATTEDTPPTGAFHIYDVIEVVPEPGKPDTNYKLKEIFQEEVSGTVSTVCEVSGRFMISQSQKVLVRDIQEDNSVIPVAFLDIPVFVTDSKSFGNLLIIGDAMQGFQFIGFDAEPYRMISLGRSMSKFQTMSLEFLVNGGDMYFAATDADRNVHVLKYAPDEPNSLSGQRLVHCSSFTLHSTNSCMMLLPRNEEFGSPQVPSFQNVGGQVDGSVFKIVPLSEEKYRRLYVIQQQIIDRELQLGGLNPRMERLANDFYQMGHSMRPMLDFNVIRRFCGLAIDRRKSIAQKAGRHAHFEAWRDIINIEFSMRSLCQGK.

The disordered stretch occupies residues 445–465 (TREAHNPSSGTNSLMDINDDD). The span at 450-459 (NPSSGTNSLM) shows a compositional bias: polar residues.

The protein belongs to the CFT1 family. In terms of assembly, component of the cleavage and polyadenylation factor (CPF) complex, which is composed of at least PTI1, SYC1, SSU72, GLC7, MPE1, REF2, PFS2, PTA1, YSH1/BRR5, SWD2, CFT2/YDH1, YTH1, CFT1/YHH1, FIP1 and PAP1. Interacts with the phosphorylated CTD domain of RPB1/RNA polymerase II.

It localises to the nucleus. Its function is as follows. RNA-binding component of the cleavage and polyadenylation factor (CPF) complex, which plays a key role in polyadenylation-dependent pre-mRNA 3'-end formation and cooperates with cleavage factors including the CFIA complex and NAB4/CFIB. Involved in poly(A) site recognition. May be involved in coupling transcription termination and mRNA 3'-end formation. This Saccharomyces cerevisiae (strain ATCC 204508 / S288c) (Baker's yeast) protein is Protein CFT1 (CFT1).